A 950-amino-acid chain; its full sequence is A disintegrin and metalloproteinase with thrombospondin motifs 15 (950 aa).

The N-terminal stretch at 1–17 (MLLLGILTLAFAGRTAG) is a signal peptide. The propeptide occupies 18-212 (GSEPEREVVV…SRRRSGRAKR (195 aa)). Asparagine 141 carries N-linked (GlcNAc...) asparagine glycosylation. The tract at residues 151-172 (SQGAHLLQRRGVPGGPSGDPTS) is disordered. The short motif at 172 to 179 (SRCGVASG) is the Cysteine switch element. Cysteine 174 lines the Zn(2+) pocket. Positions 218–427 (RYVETLVVAD…GHGDCLLDQP (210 aa)) constitute a Peptidase M12B domain. 11 cysteine pairs are disulfide-bonded: cysteine 293–cysteine 345, cysteine 322–cysteine 327, cysteine 339–cysteine 422, cysteine 377–cysteine 406, cysteine 448–cysteine 470, cysteine 459–cysteine 480, cysteine 465–cysteine 499, cysteine 493–cysteine 504, cysteine 528–cysteine 565, cysteine 532–cysteine 570, and cysteine 543–cysteine 555. Histidine 361 serves as a coordination point for Zn(2+). Residue glutamate 362 is part of the active site. The Zn(2+) site is built by histidine 365 and histidine 371. One can recognise a Disintegrin domain in the interval 428 to 515 (SKPISLPEDL…ERHNLNKHRV (88 aa)). The TSP type-1 1 domain maps to 516 to 571 (DGSWAKWDPYGPCSRTCGGGVQLARRQCTNPTPANGGKYCEGVRVKYRSCNLEPCP). 3 N-linked (GlcNAc...) asparagine glycosylation sites follow: asparagine 591, asparagine 623, and asparagine 679. The tract at residues 701–838 (AIPAGASSID…SNQVEQPDDR (138 aa)) is spacer. The interval 798-822 (FYLPKEPREDKSSHPKDPRGPSVLH) is disordered. A compositionally biased stretch (basic and acidic residues) spans 802–816 (KEPREDKSSHPKDPR). 2 TSP type-1 domains span residues 839–895 (PPAR…EPCP) and 896–949 (TWEL…VLRP).

Zn(2+) serves as cofactor. In terms of processing, the precursor is cleaved by a furin endopeptidase. Post-translationally, glycosylated. Can be O-fucosylated by POFUT2 on a serine or a threonine residue found within the consensus sequence C1-X(2)-(S/T)-C2-G of the TSP type-1 repeat domains where C1 and C2 are the first and second cysteine residue of the repeat, respectively. Fucosylated repeats can then be further glycosylated by the addition of a beta-1,3-glucose residue by the glucosyltransferase, B3GALTL. Fucosylation mediates the efficient secretion of ADAMTS family members. Can be C-glycosylated with one or two mannose molecules on tryptophan residues within the consensus sequence W-X-X-W of the TPRs. Also N-glycosylated. These other glycosylations can also facilitate secretion. As to expression, expressed in fetal liver and kidney, but not in any of the adult tissues examined.

It localises to the secreted. The protein resides in the extracellular space. Its subcellular location is the extracellular matrix. The protein localises to the cell surface. Functionally, metalloprotease which has proteolytic activity against the proteoglycan VCAN, cleaving it at the 'Glu-1428-|-1429-Ala' site. Cleaves VCAN in the pericellular matrix surrounding myoblasts, facilitating myoblast contact and fusion which is required for skeletal muscle development and regeneration. This chain is A disintegrin and metalloproteinase with thrombospondin motifs 15 (ADAMTS15), found in Homo sapiens (Human).